The primary structure comprises 191 residues: dCTP deaminase (191 aa).

Residues 112–117, 136–138, Gln-157, Tyr-173, and Gln-183 each bind dCTP; these read KSTYAR and TLE. Glu-138 (proton donor/acceptor) is an active-site residue.

It belongs to the dCTP deaminase family. As to quaternary structure, homotrimer.

It carries out the reaction dCTP + H2O + H(+) = dUTP + NH4(+). The protein operates within pyrimidine metabolism; dUMP biosynthesis; dUMP from dCTP (dUTP route): step 1/2. Catalyzes the deamination of dCTP to dUTP. The polypeptide is dCTP deaminase (Xylella fastidiosa (strain M12)).